Consider the following 288-residue polypeptide: Beta-lactamase CARB-4 (288 aa).

Positions 1–17 are cleaved as a signal peptide; sequence MKLLLVFSLLIPSMVFA. The Acyl-ester intermediate role is filled by serine 65. Cysteines 72 and 118 form a disulfide. 229–231 lines the substrate pocket; the sequence is RSG.

Belongs to the class-A beta-lactamase family.

The enzyme catalyses a beta-lactam + H2O = a substituted beta-amino acid. With respect to regulation, inhibited by clavulanic acid and sulbactam. Hydrolyzes carbenicillin. Methicillin and oxacillin are weakly hydrolyzed. The sequence is that of Beta-lactamase CARB-4 (carB4) from Pseudomonas aeruginosa.